The following is a 392-amino-acid chain: Gastricsin (392 aa).

Positions 1 to 16 are cleaved as a signal peptide; it reads MKWMVVALLCLPLLEA. Residues 17–62 constitute a propeptide, activation peptide; sequence ALIRVPLKKMKSIRETMKEQGVLKDFLKNHKYDPGQKYHFGKFGDY. The Peptidase A1 domain maps to 76-389; sequence YYGEISIGTP…DMGNNRVGLA (314 aa). The active site involves aspartate 94. Disulfide bonds link cysteine 107–cysteine 112 and cysteine 270–cysteine 275. The active site involves aspartate 280. The cysteines at positions 314 and 347 are disulfide-linked.

It belongs to the peptidase A1 family.

The protein resides in the secreted. It carries out the reaction More restricted specificity than pepsin A, but shows preferential cleavage at Tyr-|-Xaa bonds. High activity on hemoglobin.. Hydrolyzes a variety of proteins. In Mus musculus (Mouse), this protein is Gastricsin (Pgc).